Here is a 215-residue protein sequence, read N- to C-terminus: Flagellin B1 (215 aa).

Residues 1–12 constitute a propeptide that is removed on maturation; that stretch reads MSVKNFMNNKKG.

The protein belongs to the archaeal flagellin family.

It localises to the archaeal flagellum. Its function is as follows. Flagellin is the subunit protein which polymerizes to form the filaments of archaeal flagella. The sequence is that of Flagellin B1 (flaB1) from Methanococcus vannielii (strain ATCC 35089 / DSM 1224 / JCM 13029 / OCM 148 / SB).